The following is a 602-amino-acid chain: Glutathione-regulated potassium-efflux system protein KefB (602 aa).

The next 13 helical transmembrane spans lie at 4 to 24 (TGLLTAVLVFLFAAVVAVPIA), 29 to 49 (IGAVLGYLIAGIAIGPWGLGF), 55 to 75 (EILHFSELGVVFLMFIIGLEL), 87 to 107 (IFGVGAGQVVITAAVLGALLY), 115 to 135 (AAVIGGVGLAMSSTAMALQLM), 152 to 172 (VLLFQDMAVIPALALIPILAG), 181 to 201 (VKIGLKIAAFAGMLIGGRYLL), 207 to 227 (YIVASGVREVFTAAALLVVLG), 230 to 250 (LFMDALGLSMALGTFIAGILL), 261 to 281 (IAIEPFKGLLLGLFFISVGMA), 296 to 318 (LGVLALVFIKSAILYGLARVFGL), 326 to 346 (FAGVLSQGGEFAFVLFSAAFS), and 356 to 376 (ALLLVVVTLSMMTTPLLMQVI). One can recognise an RCK N-terminal domain in the interval 400–519 (DPQVIIVGFG…NGVKDFTRET (120 aa)).

Belongs to the monovalent cation:proton antiporter 2 (CPA2) transporter (TC 2.A.37) family. KefB subfamily. In terms of assembly, interacts with the regulatory subunit KefG.

It localises to the cell inner membrane. In terms of biological role, pore-forming subunit of a potassium efflux system that confers protection against electrophiles. Catalyzes K(+)/H(+) antiport. This Yersinia pestis bv. Antiqua (strain Antiqua) protein is Glutathione-regulated potassium-efflux system protein KefB.